The chain runs to 473 residues: MSLAQLEHALQHDLQRLAHGGEPWVRPRVHPAGHVYDVVIVGAGQSGLGAAFALQRERVHNVLVIDENPPGQEGPWVTYARMQTLRTPKQITSIDLGVPTLTFRAWWEAQHGAAGWDALDKIPRGTWMDYLRWYRAALRLPVRNATQLVRIEPDAAPGIHRLHLAMGAPLMARKIILATGIQGGGQWQVPEWITQALPAQRYAHTSGPIDYAALAGKRVGILGGGASAFDNACFALDQGVARAEVFVRRAALPRVNPIRHMEQAGIIPRFAALPDADKYRMMASFFGRNQPPTNDTFQRACAHAGFALHLDAPWLGVEEHNDVVVVRTPQGEHRFDFLAIATGLVTDPRLRPELAALSGRIACWADRYQAPPGQANPVLDAHPYLGPGFELLPRTPDDAAAVDGLFAFNYSALINHGLSAAALSGLKVALPRLARAVADQLFLDDRQAMVEAYLGYDQAEFVGQWPQPTQAVA.

It belongs to the HpyO family. Homodimer. FAD serves as cofactor.

The enzyme catalyses urate + NADH + O2 + H(+) = 5-hydroxyisourate + NAD(+) + H2O. It catalyses the reaction urate + NADPH + O2 + H(+) = 5-hydroxyisourate + NADP(+) + H2O. It participates in purine metabolism; urate degradation. Its function is as follows. Catalyzes the hydroxylation of urate to 5-hydroxyisourate (HIU). Is likely to be involved in the urate degradation pathway to allantoin. Is slightly more efficient (about 2.6 times) with NADPH than NADH as the electron donor. This Xanthomonas campestris pv. campestris (strain ATCC 33913 / DSM 3586 / NCPPB 528 / LMG 568 / P 25) protein is FAD-dependent urate hydroxylase.